The sequence spans 343 residues: Isopentenyl-diphosphate delta-isomerase (343 aa).

6–7 (RK) is a binding site for substrate. FMN-binding positions include Ser-63, 64-66 (SMT), Ser-94, and Asn-122. Residue 94–96 (SMR) coordinates substrate. Substrate is bound at residue Gln-157. Glu-158 is a binding site for Mg(2+). FMN-binding positions include Lys-189, Thr-219, 269–271 (GLK), and 290–291 (AG).

Belongs to the IPP isomerase type 2 family. As to quaternary structure, homooctamer. Dimer of tetramers. Requires FMN as cofactor. NADPH serves as cofactor. It depends on Mg(2+) as a cofactor.

The protein localises to the cytoplasm. It catalyses the reaction isopentenyl diphosphate = dimethylallyl diphosphate. Its function is as follows. Involved in the biosynthesis of isoprenoids. Catalyzes the 1,3-allylic rearrangement of the homoallylic substrate isopentenyl (IPP) to its allylic isomer, dimethylallyl diphosphate (DMAPP). The sequence is that of Isopentenyl-diphosphate delta-isomerase from Rickettsia bellii (strain OSU 85-389).